The sequence spans 400 residues: Argininosuccinate synthase (400 aa).

Residues 6–14 (AYSGGLDTS) and alanine 33 each bind ATP. L-citrulline is bound by residues tyrosine 84 and serine 89. Glycine 114 is a binding site for ATP. The L-aspartate site is built by threonine 116, asparagine 120, and aspartate 121. Position 120 (asparagine 120) interacts with L-citrulline. Residues arginine 124, serine 173, serine 182, glutamate 258, and tyrosine 270 each contribute to the L-citrulline site.

The protein belongs to the argininosuccinate synthase family. Type 1 subfamily. In terms of assembly, homotetramer.

It localises to the cytoplasm. The catalysed reaction is L-citrulline + L-aspartate + ATP = 2-(N(omega)-L-arginino)succinate + AMP + diphosphate + H(+). Its pathway is amino-acid biosynthesis; L-arginine biosynthesis; L-arginine from L-ornithine and carbamoyl phosphate: step 2/3. The protein is Argininosuccinate synthase of Thermus thermophilus (strain ATCC BAA-163 / DSM 7039 / HB27).